The chain runs to 353 residues: MTAILERRESTSLWGRFCNWVTSTENRLYIGWFGVLMIPTLLTATSVFIIAFIAAPPVDIDGIREPVSGSLLYGNNIISGAVIPTSAAIGLHFYPIWEAASVDEWLYNGGPYELIVLHFLLGVACYMGREWELSFRLGMRPWIAVAYSAPVAAATAVFLIYPIGQGSFSDGMPLGISGTFNFMIVFQAEHNILMHPFHMLGVAGVFGGSLFSAMHGSLVTSSLIRETTENESANEGYRFGQEEETYNIVAAHGYFGRLIFQYASFNNSRSLHFFLAAWPVVGIWFTALGISTMAFNLNGFNFNQSVVDSQGRVINTWADIINRANLGMEVMHERNAHNFPLDLAAVEAPSTIG.

N-acetylthreonine is present on threonine 2. Threonine 2 bears the Phosphothreonine mark. Helical transmembrane passes span 29–46 (YIGW…TATS), 118–133 (HFLL…EWEL), and 142–156 (WIAV…AATA). Histidine 118 contacts chlorophyll a. Position 126 (tyrosine 126) interacts with pheophytin a. Positions 170 and 189 each coordinate [CaMn4O5] cluster. Residues 197 to 218 (FHMLGVAGVFGGSLFSAMHGSL) traverse the membrane as a helical segment. Histidine 198 is a chlorophyll a binding site. A quinone is bound by residues histidine 215 and 264–265 (SF). Histidine 215 lines the Fe cation pocket. Residue histidine 272 participates in Fe cation binding. The chain crosses the membrane as a helical span at residues 274 to 288 (FLAAWPVVGIWFTAL). [CaMn4O5] cluster-binding residues include histidine 332, glutamate 333, aspartate 342, and alanine 344. Residues 345-353 (AVEAPSTIG) constitute a propeptide that is removed on maturation.

It belongs to the reaction center PufL/M/PsbA/D family. In terms of assembly, PSII is composed of 1 copy each of membrane proteins PsbA, PsbB, PsbC, PsbD, PsbE, PsbF, PsbH, PsbI, PsbJ, PsbK, PsbL, PsbM, PsbT, PsbX, PsbY, PsbZ, Psb30/Ycf12, at least 3 peripheral proteins of the oxygen-evolving complex and a large number of cofactors. It forms dimeric complexes. It depends on The D1/D2 heterodimer binds P680, chlorophylls that are the primary electron donor of PSII, and subsequent electron acceptors. It shares a non-heme iron and each subunit binds pheophytin, quinone, additional chlorophylls, carotenoids and lipids. D1 provides most of the ligands for the Mn4-Ca-O5 cluster of the oxygen-evolving complex (OEC). There is also a Cl(-1) ion associated with D1 and D2, which is required for oxygen evolution. The PSII complex binds additional chlorophylls, carotenoids and specific lipids. as a cofactor. Post-translationally, tyr-161 forms a radical intermediate that is referred to as redox-active TyrZ, YZ or Y-Z. In terms of processing, C-terminally processed by CTPA; processing is essential to allow assembly of the oxygen-evolving complex and thus photosynthetic growth.

The protein localises to the plastid. It localises to the chloroplast thylakoid membrane. It carries out the reaction 2 a plastoquinone + 4 hnu + 2 H2O = 2 a plastoquinol + O2. Its function is as follows. Photosystem II (PSII) is a light-driven water:plastoquinone oxidoreductase that uses light energy to abstract electrons from H(2)O, generating O(2) and a proton gradient subsequently used for ATP formation. It consists of a core antenna complex that captures photons, and an electron transfer chain that converts photonic excitation into a charge separation. The D1/D2 (PsbA/PsbD) reaction center heterodimer binds P680, the primary electron donor of PSII as well as several subsequent electron acceptors. The sequence is that of Photosystem II protein D1 from Lemna minor (Common duckweed).